The sequence spans 452 residues: Oxygen-independent coproporphyrinogen III oxidase (452 aa).

One can recognise a Radical SAM core domain in the interval 45 to 278 (LDPAVPISVY…ANLAAKMFTE (234 aa)). Residue Tyr54 participates in S-adenosyl-L-methionine binding. Positions 60 and 64 each coordinate [4Fe-4S] cluster. Phe66 is an S-adenosyl-L-methionine binding site. Cys67 is a [4Fe-4S] cluster binding site. S-adenosyl-L-methionine contacts are provided by residues Gly111, 112–113 (GT), Glu144, Gln171, Arg183, Asp208, Ala242, and Ile328.

This sequence belongs to the anaerobic coproporphyrinogen-III oxidase family. As to quaternary structure, monomer. [4Fe-4S] cluster is required as a cofactor.

It localises to the cytoplasm. It carries out the reaction coproporphyrinogen III + 2 S-adenosyl-L-methionine = protoporphyrinogen IX + 2 5'-deoxyadenosine + 2 L-methionine + 2 CO2. Its pathway is porphyrin-containing compound metabolism; protoporphyrin-IX biosynthesis; protoporphyrinogen-IX from coproporphyrinogen-III (AdoMet route): step 1/1. Its function is as follows. Involved in the heme and chlorophyll biosynthesis. Catalyzes the anaerobic oxidative decarboxylation of propionate groups of rings A and B of coproporphyrinogen III to yield the vinyl groups in protoporphyrinogen IX. The protein is Oxygen-independent coproporphyrinogen III oxidase (hemN) of Cereibacter sphaeroides (strain ATCC 17025 / ATH 2.4.3) (Rhodobacter sphaeroides).